Reading from the N-terminus, the 328-residue chain is Methionyl-tRNA formyltransferase (328 aa).

S121–P124 provides a ligand contact to (6S)-5,6,7,8-tetrahydrofolate.

Belongs to the Fmt family.

It carries out the reaction L-methionyl-tRNA(fMet) + (6R)-10-formyltetrahydrofolate = N-formyl-L-methionyl-tRNA(fMet) + (6S)-5,6,7,8-tetrahydrofolate + H(+). Attaches a formyl group to the free amino group of methionyl-tRNA(fMet). The formyl group appears to play a dual role in the initiator identity of N-formylmethionyl-tRNA by promoting its recognition by IF2 and preventing the misappropriation of this tRNA by the elongation apparatus. The sequence is that of Methionyl-tRNA formyltransferase from Paraburkholderia phytofirmans (strain DSM 17436 / LMG 22146 / PsJN) (Burkholderia phytofirmans).